A 380-amino-acid polypeptide reads, in one-letter code: Beta sliding clamp (380 aa).

The protein belongs to the beta sliding clamp family. As to quaternary structure, forms a ring-shaped head-to-tail homodimer around DNA which binds and tethers DNA polymerases and other proteins to the DNA. The DNA replisome complex has a single clamp-loading complex (3 tau and 1 each of delta, delta', psi and chi subunits) which binds 3 Pol III cores (1 core on the leading strand and 2 on the lagging strand) each with a beta sliding clamp dimer. Additional proteins in the replisome are other copies of gamma, psi and chi, Ssb, DNA helicase and RNA primase.

It localises to the cytoplasm. Its function is as follows. Confers DNA tethering and processivity to DNA polymerases and other proteins. Acts as a clamp, forming a ring around DNA (a reaction catalyzed by the clamp-loading complex) which diffuses in an ATP-independent manner freely and bidirectionally along dsDNA. Initially characterized for its ability to contact the catalytic subunit of DNA polymerase III (Pol III), a complex, multichain enzyme responsible for most of the replicative synthesis in bacteria; Pol III exhibits 3'-5' exonuclease proofreading activity. The beta chain is required for initiation of replication as well as for processivity of DNA replication. The protein is Beta sliding clamp (dnaN) of Mycoplasma pneumoniae (strain ATCC 29342 / M129 / Subtype 1) (Mycoplasmoides pneumoniae).